A 576-amino-acid chain; its full sequence is Probable DNA ligase (576 aa).

Glutamate 235 is a binding site for ATP. Lysine 237 serves as the catalytic N6-AMP-lysine intermediate. The ATP site is built by arginine 242, arginine 257, glutamate 285, phenylalanine 324, arginine 422, and lysine 428.

Belongs to the ATP-dependent DNA ligase family. It depends on Mg(2+) as a cofactor.

The enzyme catalyses ATP + (deoxyribonucleotide)n-3'-hydroxyl + 5'-phospho-(deoxyribonucleotide)m = (deoxyribonucleotide)n+m + AMP + diphosphate.. Functionally, DNA ligase that seals nicks in double-stranded DNA during DNA replication, DNA recombination and DNA repair. This is Probable DNA ligase from Koribacter versatilis (strain Ellin345).